We begin with the raw amino-acid sequence, 101 residues long: Small ribosomal subunit protein bS6 (101 aa).

The protein belongs to the bacterial ribosomal protein bS6 family. Part of the 30S ribosomal subunit. Forms a tight heterodimer with protein bS18.

Its function is as follows. Located on the outer edge of the platform on the body of the 30S subunit. This is Small ribosomal subunit protein bS6 (rpsF) from Thermus thermophilus (strain ATCC BAA-163 / DSM 7039 / HB27).